The following is a 240-amino-acid chain: Phosducin-like protein 2 (240 aa).

In terms of domain architecture, Phosducin spans 54–214; it reads QRDKKIDDMS…MLGQAGAVPT (161 aa). Phosphoserine is present on residues S63 and S73. The interval 99–240 is thioredoxin fold; it reads FGSVREISGQ…DLEDKSSDFY (142 aa).

The protein belongs to the phosducin family.

The protein localises to the cytoplasm. Modulates the activation of caspases during apoptosis. The sequence is that of Phosducin-like protein 2 from Drosophila melanogaster (Fruit fly).